A 284-amino-acid chain; its full sequence is Tropomyosin-2 (284 aa).

Residues 1–284 (MDAIKKKMQA…DQTFAELTGY (284 aa)) are a coiled coil. The segment at 82–110 (ESEVATQNRKVQQIEEDLEKSEERSTTAQ) is disordered.

Belongs to the tropomyosin family. Homodimer.

In terms of biological role, tropomyosin, in association with the troponin complex, plays a central role in the calcium dependent regulation of muscle contraction. May also regulate motor systems required to maintain nuclear integrity and apico-basal polarity during embryogenesis. This Drosophila melanogaster (Fruit fly) protein is Tropomyosin-2 (Tm2).